The chain runs to 249 residues: Small ribosomal subunit protein eS6 (249 aa).

Residues 223–238 (LRQRDHSKKHTQKVHA) show a composition bias toward basic residues. A disordered region spans residues 223 to 249 (LRQRDHSKKHTQKVHAQRAEVAAFQKK).

The protein belongs to the eukaryotic ribosomal protein eS6 family. As to quaternary structure, component of the small ribosomal subunit. Part of the small subunit (SSU) processome, composed of more than 70 proteins and the RNA chaperone small nucleolar RNA (snoRNA) U3. Post-translationally, ribosomal protein S6 is the major substrate of protein kinases in eukaryote ribosomes.

It localises to the cytoplasm. Its subcellular location is the nucleus. It is found in the nucleolus. Component of the 40S small ribosomal subunit. Plays an important role in controlling cell growth and proliferation through the selective translation of particular classes of mRNA. Part of the small subunit (SSU) processome, first precursor of the small eukaryotic ribosomal subunit. During the assembly of the SSU processome in the nucleolus, many ribosome biogenesis factors, an RNA chaperone and ribosomal proteins associate with the nascent pre-rRNA and work in concert to generate RNA folding, modifications, rearrangements and cleavage as well as targeted degradation of pre-ribosomal RNA by the RNA exosome. The polypeptide is Small ribosomal subunit protein eS6 (RPS6) (Leishmania infantum).